The primary structure comprises 630 residues: PAN2-PAN3 deadenylation complex subunit PAN3 (630 aa).

The segment at Ser-7–Pro-36 adopts a C3H1-type zinc-finger fold. Disordered regions lie at residues Val-38–Gln-72 and Gly-135–Gly-171. Over residues Ser-44–Ser-56 the composition is skewed to low complexity. The segment covering Tyr-140–Ala-149 has biased composition (polar residues). The segment at Gln-231–Thr-501 is pseudokinase domain. ATP contacts are provided by residues Arg-283, Asp-333–Thr-340, and Thr-388–Lys-389. Residues Thr-502–Phe-540 adopt a coiled-coil conformation. Residues Ile-541 to Asp-630 form a knob domain region.

Belongs to the protein kinase superfamily. PAN3 family. In terms of assembly, homodimer. Forms a heterotrimer with a catalytic subunit PAN2 to form the poly(A)-nuclease (PAN) deadenylation complex. Interacts (via PAM-2 motif) with poly(A)-binding protein PAB1 (via PABC domain), conferring substrate specificity of the enzyme complex.

Its subcellular location is the cytoplasm. Regulatory subunit of the poly(A)-nuclease (PAN) deadenylation complex, one of two cytoplasmic mRNA deadenylases involved in mRNA turnover. PAN specifically shortens poly(A) tails of RNA and the activity is stimulated by poly(A)-binding protein PAB1. PAN deadenylation is followed by rapid degradation of the shortened mRNA tails by the CCR4-NOT complex. Deadenylated mRNAs are then degraded by two alternative mechanisms, namely exosome-mediated 3'-5' exonucleolytic degradation, or deadenylation-dependent mRNA decaping and subsequent 5'-3' exonucleolytic degradation by XRN1. May also be involved in post-transcriptional maturation of mRNA poly(A) tails. PAN3 acts as a positive regulator for PAN activity, recruiting the catalytic subunit PAN2 to mRNA via its interaction with RNA and with PAB1. The chain is PAN2-PAN3 deadenylation complex subunit PAN3 from Scheffersomyces stipitis (strain ATCC 58785 / CBS 6054 / NBRC 10063 / NRRL Y-11545) (Yeast).